Here is a 176-residue protein sequence, read N- to C-terminus: 2-C-methyl-D-erythritol 2,4-cyclodiphosphate synthase (176 aa).

A divalent metal cation contacts are provided by aspartate 23, histidine 25, and histidine 60. Residue 23–25 coordinates 4-CDP-2-C-methyl-D-erythritol 2-phosphate; the sequence is DSH. 149–152 contributes to the 4-CDP-2-C-methyl-D-erythritol 2-phosphate binding site; the sequence is TSGE.

Belongs to the IspF family. As to quaternary structure, homotrimer. A divalent metal cation serves as cofactor.

It catalyses the reaction 4-CDP-2-C-methyl-D-erythritol 2-phosphate = 2-C-methyl-D-erythritol 2,4-cyclic diphosphate + CMP. It participates in isoprenoid biosynthesis; isopentenyl diphosphate biosynthesis via DXP pathway; isopentenyl diphosphate from 1-deoxy-D-xylulose 5-phosphate: step 4/6. Involved in the biosynthesis of isopentenyl diphosphate (IPP) and dimethylallyl diphosphate (DMAPP), two major building blocks of isoprenoid compounds. Catalyzes the conversion of 4-diphosphocytidyl-2-C-methyl-D-erythritol 2-phosphate (CDP-ME2P) to 2-C-methyl-D-erythritol 2,4-cyclodiphosphate (ME-CPP) with a corresponding release of cytidine 5-monophosphate (CMP). The polypeptide is 2-C-methyl-D-erythritol 2,4-cyclodiphosphate synthase (Chlamydia felis (strain Fe/C-56) (Chlamydophila felis)).